A 539-amino-acid chain; its full sequence is Glucans biosynthesis protein D (539 aa).

The tat-type signal signal peptide spans 1-29 (MNRRNLLKASMALAAYGSVSASGLFAARA).

Belongs to the OpgD/OpgG family. Predicted to be exported by the Tat system. The position of the signal peptide cleavage has not been experimentally proven.

It is found in the periplasm. Its pathway is glycan metabolism; osmoregulated periplasmic glucan (OPG) biosynthesis. Its function is as follows. Probably involved in the control of the structural glucose backbone of osmoregulated periplasmic glucans (OPGs). The sequence is that of Glucans biosynthesis protein D from Pseudomonas syringae pv. syringae (strain B728a).